A 172-amino-acid polypeptide reads, in one-letter code: Cell division protein SepF (172 aa).

The segment at 18–73 is disordered; it reads RRYDEEDLPDEELTTEVYSDDGYEPSSEVTQLHHHDSNEQHARGHKAVQHRRRSEL. Positions 22 to 40 are enriched in acidic residues; that stretch reads EEDLPDEELTTEVYSDDGY. A compositionally biased stretch (basic and acidic residues) spans 48–59; the sequence is QLHHHDSNEQHA. A compositionally biased stretch (basic residues) spans 60 to 70; sequence RGHKAVQHRRR.

Belongs to the SepF family. Homodimer. Interacts with FtsZ.

It localises to the cytoplasm. Functionally, cell division protein that is part of the divisome complex and is recruited early to the Z-ring. Probably stimulates Z-ring formation, perhaps through the cross-linking of FtsZ protofilaments. Its function overlaps with FtsA. This chain is Cell division protein SepF, found in Cutibacterium acnes (strain DSM 16379 / KPA171202) (Propionibacterium acnes).